A 410-amino-acid polypeptide reads, in one-letter code: MARAKFERNKPHVNIGTIGHVDHGKTTLTAAITMTLAASGGAKARKYDDIDAAPEEKQRGITINTAHVEYETEQRHYAHVDCPGHADYVKNMITGAAQMDGAILVVSAADGPMPQTREHILLAKQVGVPSIVVFLNKADMVDDEELLELVELEVRELLSSYDFPGDDIPIVSGSALKALDFLTENPKTTRGENDWVDKIHALMDEVDAYIPTPERDIDKGLLDGLWEDVFSITGRGTVSTAGIERGKVKVGDTVELIGIKDTRTTTVTGAEMFQKTLEEGMAGDNVGLLLRGIQKNDVQRGMVIAKPKSITPHTKFEAEVYILKKEEGGRHTPFFKGYRPQFYVRTTDVTGTIDEFTADDGSTPEMVIPGDRINMTVQLICPIAIEQGMRFAIREGGRTVGAGVVAKILA.

The tr-type G domain maps to 10-214; sequence KPHVNIGTIG…EVDAYIPTPE (205 aa). Positions 19 to 26 are G1; that stretch reads GHVDHGKT. 19–26 provides a ligand contact to GTP; it reads GHVDHGKT. Mg(2+) is bound at residue Thr-26. Positions 60-64 are G2; the sequence is GITIN. Positions 81 to 84 are G3; sequence DCPG. Residues 81–85 and 136–139 contribute to the GTP site; these read DCPGH and NKAD. The tract at residues 136–139 is G4; it reads NKAD. A G5 region spans residues 174-176; sequence SAL.

The protein belongs to the TRAFAC class translation factor GTPase superfamily. Classic translation factor GTPase family. EF-Tu/EF-1A subfamily. As to quaternary structure, monomer.

It is found in the cytoplasm. The catalysed reaction is GTP + H2O = GDP + phosphate + H(+). In terms of biological role, GTP hydrolase that promotes the GTP-dependent binding of aminoacyl-tRNA to the A-site of ribosomes during protein biosynthesis. The chain is Elongation factor Tu from Arthrospira platensis (Spirulina platensis).